The following is a 515-amino-acid chain: Putative ammonium transporter 2 (515 aa).

12 helical membrane passes run 34 to 54 (GVWM…FGLL), 72 to 92 (VFDV…LTFG), 124 to 144 (GISY…STIV), 156 to 176 (SHCF…HWVW), 191 to 211 (AGCS…TLYL), 226 to 246 (VSDP…WLAF), 266 to 286 (AVGT…ITRL), 291 to 311 (IQMD…TGGC), 321 to 337 (LVGA…YPVT), 346 to 366 (VGVF…PAIF), 381 to 401 (FQTS…LLFL), and 404 to 424 (FVIL…LFLI).

The protein belongs to the ammonia transporter channel (TC 1.A.11.2) family.

It localises to the membrane. In terms of biological role, involved in the uptake of ammonia. Implicated in aging. This Caenorhabditis elegans protein is Putative ammonium transporter 2 (amt-2).